A 232-amino-acid chain; its full sequence is 5'-methylthioadenosine/S-adenosylhomocysteine nucleosidase (232 aa).

Glu-12 acts as the Proton acceptor in catalysis. Residues Gly-78, Ile-152, and 173–174 (ME) each bind substrate. Asp-197 acts as the Proton donor in catalysis.

The protein belongs to the PNP/UDP phosphorylase family. MtnN subfamily. Homodimer.

The enzyme catalyses S-adenosyl-L-homocysteine + H2O = S-(5-deoxy-D-ribos-5-yl)-L-homocysteine + adenine. It carries out the reaction S-methyl-5'-thioadenosine + H2O = 5-(methylsulfanyl)-D-ribose + adenine. It catalyses the reaction 5'-deoxyadenosine + H2O = 5-deoxy-D-ribose + adenine. The protein operates within amino-acid biosynthesis; L-methionine biosynthesis via salvage pathway; S-methyl-5-thio-alpha-D-ribose 1-phosphate from S-methyl-5'-thioadenosine (hydrolase route): step 1/2. In terms of biological role, catalyzes the irreversible cleavage of the glycosidic bond in both 5'-methylthioadenosine (MTA) and S-adenosylhomocysteine (SAH/AdoHcy) to adenine and the corresponding thioribose, 5'-methylthioribose and S-ribosylhomocysteine, respectively. Also cleaves 5'-deoxyadenosine, a toxic by-product of radical S-adenosylmethionine (SAM) enzymes, into 5-deoxyribose and adenine. Thus, is required for in vivo function of the radical SAM enzymes biotin synthase and lipoic acid synthase, that are inhibited by 5'-deoxyadenosine accumulation. The sequence is that of 5'-methylthioadenosine/S-adenosylhomocysteine nucleosidase from Salmonella paratyphi B (strain ATCC BAA-1250 / SPB7).